The chain runs to 287 residues: 2-dehydro-3-deoxyphosphooctonate aldolase (287 aa).

It belongs to the KdsA family.

It localises to the cytoplasm. The enzyme catalyses D-arabinose 5-phosphate + phosphoenolpyruvate + H2O = 3-deoxy-alpha-D-manno-2-octulosonate-8-phosphate + phosphate. Its pathway is carbohydrate biosynthesis; 3-deoxy-D-manno-octulosonate biosynthesis; 3-deoxy-D-manno-octulosonate from D-ribulose 5-phosphate: step 2/3. It functions in the pathway bacterial outer membrane biogenesis; lipopolysaccharide biosynthesis. The polypeptide is 2-dehydro-3-deoxyphosphooctonate aldolase (Rhodopseudomonas palustris (strain BisB5)).